The following is a 206-amino-acid chain: uncharacterized protein (206 aa).

The first 22 residues, 1 to 22, serve as a signal peptide directing secretion; it reads MPKLRLIGLTLLALSATAVSHA. In terms of domain architecture, SH3b spans 23 to 89; sequence EETRYVSDEL…IPLKQLSTEP (67 aa). A helical membrane pass occupies residues 169–191; it reads IIMQWFMYGGGVLGLGLLLGLVL.

It to H.influenzae HI_1605.

Its subcellular location is the membrane. This is an uncharacterized protein from Escherichia coli O157:H7.